A 138-amino-acid polypeptide reads, in one-letter code: Cysteine desulfuration protein SufE (138 aa).

Residue Cys-51 is the Cysteine persulfide intermediate of the active site.

It belongs to the SufE family. In terms of assembly, homodimer. Interacts with SufS.

It localises to the cytoplasm. The protein operates within cofactor biosynthesis; iron-sulfur cluster biosynthesis. Participates in cysteine desulfuration mediated by SufS. Cysteine desulfuration mobilizes sulfur from L-cysteine to yield L-alanine and constitutes an essential step in sulfur metabolism for biosynthesis of a variety of sulfur-containing biomolecules. Functions as a sulfur acceptor for SufS, by mediating the direct transfer of the sulfur atom from the S-sulfanylcysteine of SufS, an intermediate product of cysteine desulfuration process. This is Cysteine desulfuration protein SufE from Escherichia coli (strain K12 / MC4100 / BW2952).